The sequence spans 809 residues: Interleukin-4 receptor subunit alpha (809 aa).

The N-terminal stretch at Met-1–Ser-25 is a signal peptide. The Extracellular segment spans residues Val-26–Arg-231. A disulfide bridge links Cys-34 with Cys-44. Asn-53 and Asn-71 each carry an N-linked (GlcNAc...) asparagine glycan. A disulfide bond links Cys-74 and Cys-86. Residues Asn-112, Asn-128, and Asn-161 are each glycosylated (N-linked (GlcNAc...) asparagine). One can recognise a Fibronectin type-III domain in the interval Ala-125–Asn-222. Ser-163 is modified (phosphoserine). Residues Asn-175 and Asn-208 are each glycosylated (N-linked (GlcNAc...) asparagine). Residues Trp-211–Ser-215 carry the WSXWS motif motif. Residues Leu-232 to Ile-255 traverse the membrane as a helical segment. The Cytoplasmic segment spans residues Lys-256–Ser-809. The Box 1 motif signature appears at Trp-261 to Ala-269. Disordered regions lie at residues Glu-369 to Arg-397 and Ser-441 to Gln-468. Polar residues predominate over residues Ala-447–Gln-468. At Tyr-488 the chain carries Phosphotyrosine. The tract at residues Leu-514–Pro-536 is disordered. 3 positions are modified to phosphotyrosine: Tyr-566, Tyr-590, and Tyr-618. The interval Gln-606–Arg-674 is disordered. An ITIM motif motif is present at residues Ile-695 to Leu-700.

This sequence belongs to the type I cytokine receptor family. Type 4 subfamily. The functional IL4 receptor is formed by initial binding of IL4 to IL4R. Subsequent recruitment to the complex of the common gamma chain, in immune cells, creates a type I receptor and, in non-immune cells, of IL13RA1 forms a type II receptor. IL4R can also interact with the IL13/IL13RA1 complex to form a similar type II receptor. Interacts with PIK3C3. Interacts with the SH2-containing phosphatases, PTPN6/SHIP1, PTPN11/SHIP2 and INPP5D/SHIP. Interacts with JAK1 through a Box 1-containing region; inhibited by SOCS5. Interacts with SOCS5; inhibits IL4 signaling. Interacts with JAK3. Interacts with CLM1. Interacts with IL13RA2. Post-translationally, on IL4 binding, phosphorylated on tyrosine residues in the cytoplasmic domain.

The protein localises to the cell membrane. It localises to the secreted. Receptor for both interleukin 4 and interleukin 13. Couples to the JAK1/2/3-STAT6 pathway. The IL4 response is involved in promoting Th2 differentiation. The IL4/IL13 responses are involved in regulating IgE production and, chemokine and mucus production at sites of allergic inflammation. In certain cell types, can signal through activation of insulin receptor substrates, IRS1/IRS2. The sequence is that of Interleukin-4 receptor subunit alpha (IL4R) from Equus caballus (Horse).